We begin with the raw amino-acid sequence, 323 residues long: Ankyrin repeat and SOCS box protein 11 (323 aa).

7 ANK repeats span residues alanine 64–leucine 93, asparagine 97–alanine 126, histidine 130–leucine 159, tyrosine 162–glutamine 191, glutamine 195–histidine 224, tryptophan 227–leucine 256, and glutamine 260–glutamine 289. The 51-residue stretch at serine 273–glutamine 323 folds into the SOCS box domain.

This sequence belongs to the ankyrin SOCS box (ASB) family. Substrate-recognition component of the ECS(ASB11) complex, composed of ASB11, CUL5, ELOB, ELOC and RNF7/RBX2.

The protein localises to the endoplasmic reticulum. The protein operates within protein modification; protein ubiquitination. Its function is as follows. Substrate-recognition component of a cullin-5-RING E3 ubiquitin-protein ligase complex (ECS complex, also named CRL5 complex), which mediates the ubiquitination and subsequent proteasomal degradation of target proteins, such as BIK, DIRAS2 and RPN1. The ECS(ASB11) complex acts as a regulator of the endoplasmic reticulum unfolded protein response by mediating ubiquitination and degradation of BIK. This Mus musculus (Mouse) protein is Ankyrin repeat and SOCS box protein 11 (Asb11).